We begin with the raw amino-acid sequence, 80 residues long: UPF0291 protein EF_1580 (80 aa).

Residues 60-80 (TDVTPEKLKKIQREKGLHNRK) form a disordered region. Basic and acidic residues predominate over residues 63 to 80 (TPEKLKKIQREKGLHNRK).

The protein belongs to the UPF0291 family.

The protein resides in the cytoplasm. The sequence is that of UPF0291 protein EF_1580 from Enterococcus faecalis (strain ATCC 700802 / V583).